We begin with the raw amino-acid sequence, 215 residues long: Vesicle-trafficking protein SEC22b (215 aa).

The Cytoplasmic portion of the chain corresponds to 1–190; that stretch reads MVLLTMIARV…RQDAKYLNMR (190 aa). In terms of domain architecture, Longin spans 6–119; sequence MIARVADGLP…YSFIEFDNYI (114 aa). The v-SNARE coiled-coil homology domain occupies 134–194; that stretch reads NLSSVNTELQ…KYLNMRSTYA (61 aa). The chain crosses the membrane as a helical span at residues 191-213; that stretch reads STYAKLAAVAVFSVMLIVYIRFW. The Lumenal segment spans residues 214 to 215; it reads WL.

Belongs to the synaptobrevin family. In terms of assembly, component of 2 distinct SNARE complexes.

The protein resides in the endoplasmic reticulum membrane. It localises to the endoplasmic reticulum-Golgi intermediate compartment membrane. It is found in the golgi apparatus. Its subcellular location is the cis-Golgi network membrane. The protein localises to the trans-Golgi network membrane. The protein resides in the melanosome. In terms of biological role, SNARE involved in targeting and fusion of ER-derived transport vesicles with the Golgi complex as well as Golgi-derived retrograde transport vesicles with the ER. This Xenopus tropicalis (Western clawed frog) protein is Vesicle-trafficking protein SEC22b.